We begin with the raw amino-acid sequence, 657 residues long: Pyoverdine export ATP-binding/permease protein PvdT (657 aa).

One can recognise an ABC transporter domain in the interval 6–245 (IDLRNIRKSY…LSANAGALQA (240 aa)). 43-50 (GASGSGKS) serves as a coordination point for ATP. The next 4 helical transmembrane spans lie at 285–305 (ALTL…LAVG), 532–552 (LSLM…IGVM), 590–610 (LSVV…GILI), and 620–640 (LAAV…FGFM).

Belongs to the ABC transporter superfamily. Macrolide exporter (TC 3.A.1.122) family. As to quaternary structure, part of the tripartite efflux system PvdRT-OpmQ, which is composed of an inner membrane component with both ATPase and permease domains, PvdT, a periplasmic membrane fusion protein, PvdR, and an outer membrane component, OpmQ.

The protein resides in the cell inner membrane. Its function is as follows. Part of the tripartite efflux system PvdRT-OpmQ required for the secretion into the extracellular milieu of the siderophore pyoverdine (PVD), which is involved in iron acquisition. This subunit binds PVD and drives its secretion by hydrolyzing ATP. The system is responsible for export of newly synthesized PVD after the final steps of biosynthesis have taken place in the periplasm. It is also responsible for recycling of PVD after internalization of ferri-PVD into the periplasm by the outer-membrane receptor FpvA and release of iron from PVD, thus making PVD available for new cycles of iron uptake. This chain is Pyoverdine export ATP-binding/permease protein PvdT, found in Pseudomonas fluorescens (strain ATCC BAA-477 / NRRL B-23932 / Pf-5).